The chain runs to 440 residues: MVPEPGPTANSTPAWGAGPPSAPGGSGWVAAALCVVIALTAAANSLLIALICTQPALRNTSNFFLVSLFTSDLMVGLVVMPPAMLNALYGRWVLARGLCLLWTAFDVMCCSASILNLCLISLDRYLLILSPLRYKLRMTPLRALALVLGAWSLAALASFLPLLLGWHELGHARPPVPGQCRLLASLPFVLVASGLTFFLPSGAICFTYCRILLAARKQAVQVASLTTGMASQASETLQVPRTPRPGVESADSRRLATKHSRKALKASLTLGILLGMFFVTWLPFFVANIVQAVCDCISPGLFDVLTWLGYCNSTMNPIIYPLFMRDFKRALGRFLPCPRCPRERQASLASPSLRTSHSGPRPGLSLQQVLPLPLPPDSDSDSDAGSGGSSGLRLTAQLLLPGEATQDPPLPTRAAAAVNFFNIDPAEPELRPHPLGIPTN.

The Extracellular portion of the chain corresponds to 1–27; it reads MVPEPGPTANSTPAWGAGPPSAPGGSG. A helical transmembrane segment spans residues 28–52; that stretch reads WVAAALCVVIALTAAANSLLIALIC. The Cytoplasmic portion of the chain corresponds to 53-62; the sequence is TQPALRNTSN. The chain crosses the membrane as a helical span at residues 63-88; sequence FFLVSLFTSDLMVGLVVMPPAMLNAL. At 89–96 the chain is on the extracellular side; sequence YGRWVLAR. The chain crosses the membrane as a helical span at residues 97–122; sequence GLCLLWTAFDVMCCSASILNLCLISL. Residues Cys-99 and Cys-180 are joined by a disulfide bond. Position 106 (Asp-106) interacts with serotonin. Topologically, residues 123-142 are cytoplasmic; the sequence is DRYLLILSPLRYKLRMTPLR. The chain crosses the membrane as a helical span at residues 143 to 167; the sequence is ALALVLGAWSLAALASFLPLLLGWH. Residues 168–185 are Extracellular-facing; sequence ELGHARPPVPGQCRLLAS. Residues 186–209 form a helical membrane-spanning segment; that stretch reads LPFVLVASGLTFFLPSGAICFTYC. Residues 210 to 266 lie on the Cytoplasmic side of the membrane; sequence RILLAARKQAVQVASLTTGMASQASETLQVPRTPRPGVESADSRRLATKHSRKALKA. The helical transmembrane segment at 267-293 threads the bilayer; sequence SLTLGILLGMFFVTWLPFFVANIVQAV. Asn-288 provides a ligand contact to serotonin. At 294–299 the chain is on the extracellular side; the sequence is CDCISP. A helical membrane pass occupies residues 300 to 323; it reads GLFDVLTWLGYCNSTMNPIIYPLF. Residues 324 to 440 lie on the Cytoplasmic side of the membrane; sequence MRDFKRALGR…RPHPLGIPTN (117 aa). A disordered region spans residues 346–392; the sequence is ASLASPSLRTSHSGPRPGLSLQQVLPLPLPPDSDSDSDAGSGGSSGL. Polar residues predominate over residues 347–358; it reads SLASPSLRTSHS. Residues 362 to 371 show a composition bias toward low complexity; it reads PGLSLQQVLP.

This sequence belongs to the G-protein coupled receptor 1 family. Interacts with MTOR, RPTOR and NF1. Interacts with CDK5. In terms of tissue distribution, expressed in several human brain regions, most prominently in the caudate nucleus.

The protein resides in the cell membrane. G-protein coupled receptor for 5-hydroxytryptamine (serotonin), a biogenic hormone that functions as a neurotransmitter, a hormone and a mitogen. Also has a high affinity for tricyclic psychotropic drugs. Ligand binding causes a conformation change that triggers signaling via guanine nucleotide-binding proteins (G proteins) and modulates the activity of downstream effectors. HTR6 is coupled to G(s) G alpha proteins and mediates activation of adenylate cyclase activity. Controls pyramidal neurons migration during corticogenesis, through the regulation of CDK5 activity. Is an activator of mTOR signaling. The protein is 5-hydroxytryptamine receptor 6 of Homo sapiens (Human).